Consider the following 771-residue polypeptide: GPI mannosyltransferase 3 (771 aa).

Residues 1–47 form a disordered region; the sequence is MSSSRRRKSFTSSSSSSSPSFHSPPPTSRLRPRSPPSSNTKTSPTST. Low complexity-rich tracts occupy residues 10–21 and 36–47; these read FTSSSSSSSPSF and PSSNTKTSPTST. Helical transmembrane passes span 49–69, 251–271, 285–305, 341–361, 378–398, 410–430, and 441–461; these read PLAT…AFTV, LSLA…WMGL, AILV…SCVV, YVSQ…LVGL, SLVQ…LSLV, LPSL…PAVI, and LTLI…TIYH. The tract at residues 575-594 is disordered; it reads SYLSAQPRPQHPSTTSTNDA.

This sequence belongs to the glycosyltransferase 22 family. PIGB subfamily.

The protein localises to the endoplasmic reticulum membrane. It participates in glycolipid biosynthesis; glycosylphosphatidylinositol-anchor biosynthesis. Mannosyltransferase involved in glycosylphosphatidylinositol-anchor biosynthesis. Transfers the third mannose to Man2-GlcN-acyl-PI during GPI precursor assembly. The protein is GPI mannosyltransferase 3 (gpi10) of Aspergillus fumigatus (strain ATCC MYA-4609 / CBS 101355 / FGSC A1100 / Af293) (Neosartorya fumigata).